Consider the following 566-residue polypeptide: Putative ABC transporter ATP-binding protein lp_0149 (566 aa).

2 ABC transporter domains span residues 6–247 and 302–536; these read ISFK…GLRE and LAIE…ASLA. ATP contacts are provided by residues 40 to 47 and 335 to 342; these read GPSGSGKS and GQNGTGKS.

Belongs to the ABC transporter superfamily.

It is found in the cell membrane. Its function is as follows. Probably part of an ABC transporter complex. Responsible for energy coupling to the transport system. In Lactiplantibacillus plantarum (strain ATCC BAA-793 / NCIMB 8826 / WCFS1) (Lactobacillus plantarum), this protein is Putative ABC transporter ATP-binding protein lp_0149.